The sequence spans 381 residues: Dual specificity protein phosphatase 6 (381 aa).

Residues 30 to 148 (GNERLLLMDC…FQAEFSLHCE (119 aa)) form the Rhodanese domain. The tract at residues 176 to 203 (SSSDIESDLDRDPNSATDSDGSPLSNSQ) is disordered. The segment covering 189–203 (NSATDSDGSPLSNSQ) has biased composition (polar residues). The Tyrosine-protein phosphatase domain maps to 206–349 (FPVEILPFLY…LLDFERTLGL (144 aa)). The Phosphocysteine intermediate role is filled by Cys293.

Belongs to the protein-tyrosine phosphatase family. Non-receptor class dual specificity subfamily. Interacts with MAPK1/ERK2. In terms of processing, ubiquitinated by the SCF(FBXO31) complex, leading to its proteasomal degradation. Expressed in keratinocytes (at protein level).

The protein localises to the cytoplasm. The catalysed reaction is O-phospho-L-tyrosyl-[protein] + H2O = L-tyrosyl-[protein] + phosphate. It catalyses the reaction O-phospho-L-seryl-[protein] + H2O = L-seryl-[protein] + phosphate. It carries out the reaction O-phospho-L-threonyl-[protein] + H2O = L-threonyl-[protein] + phosphate. Functionally, dual specificity protein phosphatase, which mediates dephosphorylation and inactivation of MAP kinases. Has a specificity for the ERK family. Plays an important role in alleviating chronic postoperative pain. Necessary for the normal dephosphorylation of the long-lasting phosphorylated forms of spinal MAPK1/3 and MAP kinase p38 induced by peripheral surgery, which drives the resolution of acute postoperative allodynia. Also important for dephosphorylation of MAPK1/3 in local wound tissue, which further contributes to resolution of acute pain. Promotes cell differentiation by regulating MAPK1/MAPK3 activity and regulating the expression of AP1 transcription factors. In Homo sapiens (Human), this protein is Dual specificity protein phosphatase 6 (DUSP6).